A 172-amino-acid chain; its full sequence is Large ribosomal subunit protein uL10 (172 aa).

This sequence belongs to the universal ribosomal protein uL10 family. As to quaternary structure, part of the ribosomal stalk of the 50S ribosomal subunit. The N-terminus interacts with L11 and the large rRNA to form the base of the stalk. The C-terminus forms an elongated spine to which L12 dimers bind in a sequential fashion forming a multimeric L10(L12)X complex.

Functionally, forms part of the ribosomal stalk, playing a central role in the interaction of the ribosome with GTP-bound translation factors. The protein is Large ribosomal subunit protein uL10 of Rhodopseudomonas palustris (strain BisB5).